Here is a 572-residue protein sequence, read N- to C-terminus: MRTSQYLLSTLKETPADAEVISHQLMLRAGMIRKLASGLYTWLPTGLRVLKKVENIVREEMNNANAIEVCMPVVQPADLWQESGRWEQYGPELLRFVDRGDRPFVLGPTHEEVITDLIRNEISSYKQLPLNFFQIQTKFRDEVRPRFGVMRSREFLMKDAYSFHTSQESLQATYEAMYEAYSKIFSRMGLDFRPVHADTGSIGGSASHEFQVLADSGEDDIVFSTGSDFAANIELAEAVAPAEPRAAASEELRIVDTPNAKTIAELVEQFQLPVTKTVKTLLVRAKEESGHKLVALLVRGDHELNEIKAEKLPQVAAPLVFATEEEIRAIVGAGPGSLGPVNLQVPVVADRSVAAMSDFGAGANIDGKHYFGINWERDLPLPQVADIRNVVEGDASPDGKGTLLIKRGIEVGHIFQLGTKYSEAMKATVQGEDGRNQVLTMGCYGIGVTRVVAAAIEQNHDERGIIWPDAIAPFQVAILPMNMHKSFRVQALAEELYNTLRSHGIDVILDDRKERPGVMFADMELIGVPHSIVIGDRNLDSEEIEYKNRRVGEKQMIKTGEVIDFLLGQIKR.

This sequence belongs to the class-II aminoacyl-tRNA synthetase family. ProS type 1 subfamily. As to quaternary structure, homodimer.

The protein resides in the cytoplasm. The enzyme catalyses tRNA(Pro) + L-proline + ATP = L-prolyl-tRNA(Pro) + AMP + diphosphate. Its function is as follows. Catalyzes the attachment of proline to tRNA(Pro) in a two-step reaction: proline is first activated by ATP to form Pro-AMP and then transferred to the acceptor end of tRNA(Pro). As ProRS can inadvertently accommodate and process non-cognate amino acids such as alanine and cysteine, to avoid such errors it has two additional distinct editing activities against alanine. One activity is designated as 'pretransfer' editing and involves the tRNA(Pro)-independent hydrolysis of activated Ala-AMP. The other activity is designated 'posttransfer' editing and involves deacylation of mischarged Ala-tRNA(Pro). The misacylated Cys-tRNA(Pro) is not edited by ProRS. In Serratia proteamaculans (strain 568), this protein is Proline--tRNA ligase.